Reading from the N-terminus, the 652-residue chain is O-fucosyltransferase 15 (652 aa).

Residues 91–111 (TAAFVIVLVGFFIFVNWFMLS) form a helical; Signal-anchor for type II membrane protein membrane-spanning segment. N-linked (GlcNAc...) asparagine glycosylation is found at N139, N169, and N251. 426-428 (HLR) lines the substrate pocket. N-linked (GlcNAc...) asparagine glycans are attached at residues N464, N546, and N607.

The protein belongs to the glycosyltransferase GT106 family.

The protein resides in the membrane. Its pathway is glycan metabolism. In Arabidopsis thaliana (Mouse-ear cress), this protein is O-fucosyltransferase 15.